The primary structure comprises 352 residues: Probable protein kinase DDB_G0291842 (352 aa).

The segment at 1-57 (MRPLPDQSAFEDKSELVSKKQKNEDENNENRSPETPRTPKVCPKTPTKTPLRTPTKN) is disordered. Residues 10–34 (FEDKSELVSKKQKNEDENNENRSPE) are compositionally biased toward basic and acidic residues. Residues 38-56 (TPKVCPKTPTKTPLRTPTK) show a composition bias toward low complexity. The Protein kinase domain occupies 77 to 331 (FEYINQIGEG…IQSLLKYDKL (255 aa)). ATP contacts are provided by residues 83-91 (IGEGSFAKV) and lysine 106. Residue aspartate 207 is the Proton acceptor of the active site. Residues asparagine 212 and aspartate 225 each coordinate Mg(2+).

The protein belongs to the protein kinase superfamily. Ser/Thr protein kinase family. WEE1 subfamily.

The enzyme catalyses L-seryl-[protein] + ATP = O-phospho-L-seryl-[protein] + ADP + H(+). It catalyses the reaction L-threonyl-[protein] + ATP = O-phospho-L-threonyl-[protein] + ADP + H(+). The sequence is that of Probable protein kinase DDB_G0291842 from Dictyostelium discoideum (Social amoeba).